Here is a 160-residue protein sequence, read N- to C-terminus: Phosphopantetheine adenylyltransferase (160 aa).

Thr10 contributes to the substrate binding site. ATP-binding positions include 10 to 11 (TF) and His18. 3 residues coordinate substrate: Lys42, Met74, and Arg88. ATP contacts are provided by residues 89 to 91 (GVR), Glu99, and 124 to 130 (WSYISST).

It belongs to the bacterial CoaD family. As to quaternary structure, homohexamer. Mg(2+) serves as cofactor.

The protein resides in the cytoplasm. It carries out the reaction (R)-4'-phosphopantetheine + ATP + H(+) = 3'-dephospho-CoA + diphosphate. The protein operates within cofactor biosynthesis; coenzyme A biosynthesis; CoA from (R)-pantothenate: step 4/5. In terms of biological role, reversibly transfers an adenylyl group from ATP to 4'-phosphopantetheine, yielding dephospho-CoA (dPCoA) and pyrophosphate. The protein is Phosphopantetheine adenylyltransferase of Sodalis glossinidius (strain morsitans).